The following is a 304-amino-acid chain: Polyisoprenyl-teichoic acid--peptidoglycan teichoic acid transferase TagU (304 aa).

Residues 1–4 (MKKK) lie on the Cytoplasmic side of the membrane. A helical; Signal-anchor for type II membrane protein membrane pass occupies residues 5–25 (ILFWILGIIGILIIGGGAYAY). Over 26–304 (SIYSSVSKTL…KLRAHLEVTK (279 aa)) the chain is Extracellular.

It belongs to the LytR/CpsA/Psr (LCP) family.

It is found in the cell membrane. Its pathway is cell wall biogenesis. May catalyze the final step in cell wall teichoic acid biosynthesis, the transfer of the anionic cell wall polymers (APs) from their lipid-linked precursor to the cell wall peptidoglycan (PG). In Bacillus cereus (strain ATCC 14579 / DSM 31 / CCUG 7414 / JCM 2152 / NBRC 15305 / NCIMB 9373 / NCTC 2599 / NRRL B-3711), this protein is Polyisoprenyl-teichoic acid--peptidoglycan teichoic acid transferase TagU.